Here is a 178-residue protein sequence, read N- to C-terminus: Fucolectin-1 (178 aa).

The signal sequence occupies residues 1–20; the sequence is MKVKTIMLLFQILAISTIKS. An F5/8 type C-like region spans residues 29-178; it reads QENVAVRGKA…VEVNALLPVN (150 aa). 3 residues coordinate Ca(2+): Asp59, Asn61, and Ser70. Cystine bridges form between Cys71-Cys167, Cys103-Cys104, and Cys129-Cys145. Residues His73 and Arg100 each coordinate alpha-L-fucose. Positions 100-102 match the Cell attachment site motif; sequence RGD. Arg107 provides a ligand contact to alpha-L-fucose. Ca(2+)-binding residues include Cys167 and Glu168.

It belongs to the fucolectin family. Homotrimer. In terms of tissue distribution, parenchymal hepatocytes.

The protein resides in the secreted. It is found in the extracellular space. Acts as a defensive agent. Recognizes blood group fucosylated oligosaccharides including A, B, H and Lewis B-type antigens. Does not recognize Lewis A antigen and has low affinity for monovalent haptens. The chain is Fucolectin-1 from Anguilla japonica (Japanese eel).